The chain runs to 300 residues: Serine/arginine-rich splicing factor SR34A (300 aa).

The 76-residue stretch at 7-82 (RSIYVGNLPG…CRLRVELAHG (76 aa)) folds into the RRM 1 domain. Disordered regions lie at residues 81–110 (HGGRGQSSSDRRGGYGGGGSGYGGGGGGGG) and 198–300 (YESS…EGSV). The segment covering 94–110 (GYGGGGSGYGGGGGGGG) has biased composition (gly residues). Residues 122–200 (FRVIVRGLPS…GFIRVKKYES (79 aa)) enclose the RRM 2 domain. Basic residues predominate over residues 203–239 (SRSRSPSRSRSRSRSRSRSRGRGRSHSRSRSLSRSKS). A phosphoserine mark is found at Ser207, Ser209, Ser231, Ser233, Ser239, Ser259, Ser275, and Ser285. The span at 253-262 (SRSISKSRSP) shows a compositional bias: low complexity. Basic residues predominate over residues 275–287 (SRSKSRSRSRSRS).

It belongs to the splicing factor SR family. SR subfamily. As to quaternary structure, component of the spliceosome.

The protein localises to the nucleus speckle. It localises to the nucleus. It is found in the nucleoplasm. Its function is as follows. Probably involved in intron recognition and spliceosome assembly. This Arabidopsis thaliana (Mouse-ear cress) protein is Serine/arginine-rich splicing factor SR34A (SR34A).